A 913-amino-acid chain; its full sequence is Chitin synthase 1 (913 aa).

Positions 1–27 (MSGAPPPSSGFAPRSYGQQPLSHAPRS) are disordered. T237, E241, and D291 together coordinate UDP-N-acetyl-alpha-D-glucosamine. N-linked (GlcNAc...) asparagine glycosylation occurs at N420. D496 is a catalytic residue. N510 is a glycosylation site (N-linked (GlcNAc...) asparagine). The next 6 membrane-spanning stretches (helical) occupy residues 539 to 559 (WLNGAFFATLFSIWNWGRIYS), 581 to 601 (YTAFGFFLPANLYLALFFIVF), 625 to 645 (AVYIYNFSYLFGLLMLIIIGL), 658 to 678 (FVGAVFGLMMMLSSLVGAGIF), 684 to 704 (TVHSIVVSILTVGVYFIASAL), and 711 to 731 (IFMTFTHYTALIPSFVNIFTI). A Conserved SWG motif motif is present at residues 741 to 743 (SWG). Helical transmembrane passes span 800-820 (VLLTWAFSNLIFALFVVYFAS) and 825-845 (MPVLYIFVASLNTCRLLGSIG). Residues N867 and N900 are each glycosylated (N-linked (GlcNAc...) asparagine).

It belongs to the chitin synthase family. Class II subfamily. Homodimer. The cofactor is Mn(2+).

It is found in the cell membrane. The catalysed reaction is [(1-&gt;4)-N-acetyl-beta-D-glucosaminyl](n) + UDP-N-acetyl-alpha-D-glucosamine = [(1-&gt;4)-N-acetyl-beta-D-glucosaminyl](n+1) + UDP + H(+). The activity is inhibited by nikkomycin Z (NikZ). In terms of biological role, polymerizes chitin, a structural polymer of the cell wall and septum, by transferring the sugar moiety of UDP-GlcNAc to the non-reducing end of the growing chitin polymer. Involved in mycelial growth, sporangial production, zoospore release and pathogenesis. The protein is Chitin synthase 1 of Phytophthora sojae (strain P6497) (Soybean stem and root rot agent).